Reading from the N-terminus, the 583-residue chain is Aspartate--tRNA ligase (583 aa).

Glu174 contributes to the L-aspartate binding site. Positions 198–201 are aspartate; sequence QITK. Position 220 (Arg220) interacts with L-aspartate. ATP contacts are provided by residues 220–222 and Gln229; that span reads RDE. His443 lines the L-aspartate pocket. Glu477 serves as a coordination point for ATP. Arg484 serves as a coordination point for L-aspartate. Residue 529–532 participates in ATP binding; the sequence is GLDR.

It belongs to the class-II aminoacyl-tRNA synthetase family. Type 1 subfamily. Homodimer.

The protein localises to the cytoplasm. The catalysed reaction is tRNA(Asp) + L-aspartate + ATP = L-aspartyl-tRNA(Asp) + AMP + diphosphate. Functionally, catalyzes the attachment of L-aspartate to tRNA(Asp) in a two-step reaction: L-aspartate is first activated by ATP to form Asp-AMP and then transferred to the acceptor end of tRNA(Asp). The sequence is that of Aspartate--tRNA ligase from Streptococcus thermophilus (strain ATCC BAA-250 / LMG 18311).